Consider the following 300-residue polypeptide: L-threonine kinase (300 aa).

92–102 contributes to the ATP binding site; it reads PVAKGMASSTA.

It belongs to the GHMP kinase family. PduX subfamily.

It localises to the cytoplasm. The enzyme catalyses L-threonine + ATP = O-phospho-L-threonine + ADP + H(+). The protein operates within cofactor biosynthesis; adenosylcobalamin biosynthesis. Its pathway is polyol metabolism; 1,2-propanediol degradation. Its function is as follows. L-threonine kinase that catalyzes the conversion of L-threonine to L-threonine-O-3-phosphate. Involved in the de novo synthesis of adenosylcobalamin (coenzyme B12) and the assimilation of cobyric acid. Uses ATP; the activity with CTP, GTP or UTP is 6, 11, and 3% of the activity with ATP, respectively. The 1,2-propanediol (1,2-PD)-specific bacterial microcompartment (BMC) concentrates low levels of 1,2-PD catabolic enzymes, concentrates volatile reaction intermediates thus enhancing pathway flux and keeps the level of toxic, mutagenic propionaldehyde low. This gene probably benefits from its induction via the Pdu promoter, rather than a physical interaction with the BMC. In Salmonella typhimurium (strain LT2 / SGSC1412 / ATCC 700720), this protein is L-threonine kinase.